The chain runs to 286 residues: Oxidoreductase clz15 (286 aa).

The protein belongs to the asaB hydroxylase/desaturase family.

It participates in secondary metabolite biosynthesis. In terms of biological role, oxidoreductase; part of the gene cluster that mediates the biosynthesis of squalestatin S1 (SQS1, also known as zaragozic acid A), a heavily oxidized fungal polyketide that offers potent cholesterol lowering activity by targeting squalene synthase (SS). SQS1 is composed of a 2,8-dioxobicyclic[3.2.1]octane-3,4,5-tricarboxyclic acid core that is connected to two lipophilic polyketide arms. These initial steps feature the priming of an unusual benzoic acid starter unit onto the highly reducing polyketide synthase clz14, followed by oxaloacetate extension and product release to generate a tricarboxylic acid containing product. The phenylalanine ammonia lyase (PAL) clz10 and the acyl-CoA ligase clz12 are involved in transforming phenylalanine into benzoyl-CoA. The citrate synthase-like protein clz17 is involved in connecting the C-alpha-carbons of the hexaketide chain and oxaloacetate to afford the tricarboxylic acid unit. The potential hydrolytic enzymes, clz11 and clz13, are in close proximity to pks2 and may participate in product release. On the other side, the tetraketide arm is synthesized by a the squalestatin tetraketide synthase clz2 and enzymatically esterified to the core in the last biosynthetic step, by the acetyltransferase clz6. The biosynthesis of the tetraketide must involve 3 rounds of chain extension. After the first and second rounds methyl-transfer occurs, and in all rounds of extension the ketoreductase and dehydratase are active. The enoyl reductase and C-MeT of clz2 are not active in the final round of extension. The acetyltransferase clz6 appears to have a broad substrate selectivity for its acyl CoA substrate, allowing the in vitro synthesis of novel squalestatins. The biosynthesis of SQS1 requires several oxidative steps likely performed by oxidoreductases clz3, clz15 and clz16. Finally, in support of the identification of the cluster as being responsible for SQS1 production, the cluster contains a gene encoding a putative squalene synthase (SS) clz20, suggesting a likely mechanism for self-resistance. This is Oxidoreductase clz15 from Cochliobolus lunatus (Filamentous fungus).